We begin with the raw amino-acid sequence, 180 residues long: Chromosome-anchoring protein RacA (180 aa).

Positions 5-25 form a DNA-binding region, H-T-H motif; the sequence is TPFIAKKLGVSPKAVVRIAQQ. Residues 89 to 151 are a coiled coil; that stretch reads SHDFEQLTAQ…LEATLKKEEP (63 aa).

The protein belongs to the RacA family.

The protein localises to the cytoplasm. Required for the formation of axial filaments and for anchoring the origin regions at the cell poles in sporulating cells, thus ensuring proper chromosome segregation in the prespore. Binds in a dispersed manner throughout the chromosome but preferentially to sites clustered in the origin portion of the chromosome, causing condensation of the chromosome and its remodeling into an elongated, anchored structure. This is Chromosome-anchoring protein RacA from Bacillus cereus (strain ATCC 10987 / NRS 248).